The following is an 85-amino-acid chain: U4-theraphotoxin-Hhn1ab (85 aa).

The N-terminal stretch at 1-22 (MKVTLIAILTCAAVLVLHTTAA) is a signal peptide. Positions 23 to 48 (EELEAESQLMEVGMPDTELAAVDEER) are excised as a propeptide. Cystine bridges form between cysteine 56/cysteine 77 and cysteine 71/cysteine 82.

This sequence belongs to the neurotoxin 12 (Hwtx-2) family. 02 (Hwtx-2) subfamily. As to expression, expressed by the venom gland.

The protein localises to the secreted. In terms of biological role, postsynaptic neurotoxin. In Cyriopagopus hainanus (Chinese bird spider), this protein is U4-theraphotoxin-Hhn1ab.